Reading from the N-terminus, the 465-residue chain is Branched-chain amino acid permease BcaP (465 aa).

The next 12 membrane-spanning stretches (helical) occupy residues 28–48, 56–76, 88–110, 149–169, 181–201, 219–239, 259–279, 309–329, 359–379, 380–400, 416–436, and 438–458; these read FLAL…PGQV, GVVF…LAYA, AYSW…ALLA, DGGI…IIVF, ILVV…ITVI, FGGF…YIGF, GIIG…LVLV, VVTA…VLAG, VWTL…AFLA, QLIS…IYSL, PFYP…FWGL, and VQAK…YFAY.

The protein belongs to the amino acid-polyamine-organocation (APC) superfamily.

Its subcellular location is the cell membrane. Functionally, branched-chain amino acid transport system that specifically transports branched-chain amino acids (BCAAs) (isoleucine, leucine and valine) and, to a lesser extent, methionine. Important for CodY-mediated regulation, and required for optimal growth in media containing free amino acids as the only amino acid source. The protein is Branched-chain amino acid permease BcaP of Lactococcus lactis subsp. cremoris (strain MG1363).